The primary structure comprises 842 residues: Envelope glycoprotein gp160 (842 aa).

Residues 1 to 23 (MGMKSGWLLFYLLVSLIKVIGSE) form the signal peptide. At 24–663 (QHWVTVYYGV…ITKWLWYIKI (640 aa)) the chain is on the extracellular side. A disulfide bridge connects residues cysteine 45 and cysteine 65. Asparagine 79, asparagine 123, asparagine 131, asparagine 134, asparagine 149, asparagine 153, asparagine 181, asparagine 190, asparagine 225, asparagine 229, asparagine 234, asparagine 255, asparagine 267, asparagine 278, asparagine 284, asparagine 290, asparagine 320, asparagine 331, and asparagine 345 each carry an N-linked (GlcNAc...) asparagine; by host glycan. 5 disulfides stabilise this stretch: cysteine 110–cysteine 198, cysteine 117–cysteine 189, cysteine 122–cysteine 150, cysteine 211–cysteine 240, and cysteine 221–cysteine 232. Residues 122–149 (CNDSYGEERNNTNMTTREPDIGYKQMKN) form a V1 region. The tract at residues 150–189 (CSFNATTELTDKKKQVYSLFYVEDVVPINAYNKTYRLINC) is V2. The interval 285–318 (CTRPGNNTGGQVQIGPAMTFYNIEKIVGDIRQAY) is V3. Cysteine 285 and cysteine 319 are oxidised to a cystine. The CD4-binding loop stretch occupies residues 353 to 363 (RNEGDLEVTHL). Cystine bridges form between cysteine 367-cysteine 423 and cysteine 374-cysteine 396. The interval 374–396 (CNTSKLFNEELLNETGEPITLPC) is V4. N-linked (GlcNAc...) asparagine; by host glycosylation is found at asparagine 375, asparagine 386, asparagine 422, and asparagine 426. 2 V5 regions span residues 439–448 (DTKETIVYPS) and 441–448 (KETIVYPS). The interval 489–510 (AAFGLGALFLGFLGAAGSTMGA) is fusion peptide. The tract at residues 552–570 (KQLQAKVLAIERYLRDQQI) is immunosuppression. A disulfide bridge links cysteine 576 with cysteine 582. 5 N-linked (GlcNAc...) asparagine; by host glycosylation sites follow: asparagine 589, asparagine 594, asparagine 595, asparagine 604, and asparagine 616. Positions 612–646 (EKVRNYSGVIFGLIEQAQEQQNTNEKSLLELDQWD) form a coiled coil. The MPER; binding to GalCer stretch occupies residues 641 to 662 (ELDQWDSLWSWFGITKWLWYIK). Residues 664–684 (AIMIVAGIVGIRIISIVITII) traverse the membrane as a helical segment. The Cytoplasmic portion of the chain corresponds to 685–842 (ARVRQGYSPL…IRQGLERALI (158 aa)). The YXXL motif; contains endocytosis signal signature appears at 691–694 (YSPL).

Belongs to the HIV-1 env protein family. In terms of assembly, the mature envelope protein (Env) consists of a homotrimer of non-covalently associated gp120-gp41 heterodimers. The resulting complex protrudes from the virus surface as a spike. There seems to be as few as 10 spikes on the average virion. Interacts with host CD4, CCR5 and CXCR4. Gp120 also interacts with the C-type lectins CD209/DC-SIGN and CLEC4M/DC-SIGNR (collectively referred to as DC-SIGN(R)). Gp120 and gp41 interact with GalCer. Gp120 interacts with host ITGA4/ITGB7 complex; on CD4+ T-cells, this interaction results in rapid activation of integrin ITGAL/LFA-1, which facilitates efficient cell-to-cell spreading of HIV-1. Gp120 interacts with cell-associated heparan sulfate; this interaction increases virus infectivity on permissive cells and may be involved in infection of CD4- cells. The mature envelope protein (Env) consists of a homotrimer of non-covalently associated gp120-gp41 heterodimers. The resulting complex protrudes from the virus surface as a spike. There seems to be as few as 10 spikes on the average virion. Highly glycosylated by host. The high number of glycan on the protein is reffered to as 'glycan shield' because it contributes to hide protein sequence from adaptive immune system. In terms of processing, palmitoylation of the transmembrane protein and of Env polyprotein (prior to its proteolytic cleavage) is essential for their association with host cell membrane lipid rafts. Palmitoylation is therefore required for envelope trafficking to classical lipid rafts, but not for viral replication. Post-translationally, specific enzymatic cleavages in vivo yield mature proteins. Envelope glycoproteins are synthesized as an inactive precursor that is heavily N-glycosylated and processed likely by host cell furin in the Golgi to yield the mature SU and TM proteins. The cleavage site between SU and TM requires the minimal sequence [KR]-X-[KR]-R. About 2 of the 9 disulfide bonds of gp41 are reduced by P4HB/PDI, following binding to CD4 receptor.

Its subcellular location is the virion membrane. It is found in the host cell membrane. The protein localises to the host endosome membrane. Functionally, oligomerizes in the host endoplasmic reticulum into predominantly trimers. In a second time, gp160 transits in the host Golgi, where glycosylation is completed. The precursor is then proteolytically cleaved in the trans-Golgi and thereby activated by cellular furin or furin-like proteases to produce gp120 and gp41. Its function is as follows. Attaches the virus to the host lymphoid cell by binding to the primary receptor CD4. This interaction induces a structural rearrangement creating a high affinity binding site for a chemokine coreceptor like CXCR4 and/or CCR5. Acts as a ligand for CD209/DC-SIGN and CLEC4M/DC-SIGNR, which are respectively found on dendritic cells (DCs), and on endothelial cells of liver sinusoids and lymph node sinuses. These interactions allow capture of viral particles at mucosal surfaces by these cells and subsequent transmission to permissive cells. HIV subverts the migration properties of dendritic cells to gain access to CD4+ T-cells in lymph nodes. Virus transmission to permissive T-cells occurs either in trans (without DCs infection, through viral capture and transmission), or in cis (following DCs productive infection, through the usual CD4-gp120 interaction), thereby inducing a robust infection. In trans infection, bound virions remain infectious over days and it is proposed that they are not degraded, but protected in non-lysosomal acidic organelles within the DCs close to the cell membrane thus contributing to the viral infectious potential during DCs' migration from the periphery to the lymphoid tissues. On arrival at lymphoid tissues, intact virions recycle back to DCs' cell surface allowing virus transmission to CD4+ T-cells. Acts as a class I viral fusion protein. Under the current model, the protein has at least 3 conformational states: pre-fusion native state, pre-hairpin intermediate state, and post-fusion hairpin state. During fusion of viral and target intracellular membranes, the coiled coil regions (heptad repeats) assume a trimer-of-hairpins structure, positioning the fusion peptide in close proximity to the C-terminal region of the ectodomain. The formation of this structure appears to drive apposition and subsequent fusion of viral and target cell membranes. Complete fusion occurs in host cell endosomes and is dynamin-dependent, however some lipid transfer might occur at the plasma membrane. The virus undergoes clathrin-dependent internalization long before endosomal fusion, thus minimizing the surface exposure of conserved viral epitopes during fusion and reducing the efficacy of inhibitors targeting these epitopes. Membranes fusion leads to delivery of the nucleocapsid into the cytoplasm. The chain is Envelope glycoprotein gp160 from Human immunodeficiency virus type 1 group N (isolate YBF30) (HIV-1).